The sequence spans 184 residues: Ras-related protein Rap-1b (184 aa).

10-18 (GSGGVGKSA) is a GTP binding site. The interval 25–67 (QGIFVEKYDPTIEDSYRKQVEVDAQQCMLEILDTAGTEQFTAM) is interaction with KRIT1. The short motif at 32–40 (YDPTIEDSY) is the Effector region element. GTP is bound by residues 57–61 (DTAGT), 116–119 (NKCD), and 147–149 (SAK). Residue S179 is modified to Phosphoserine; by PKA. C181 carries the cysteine methyl ester modification. C181 is lipidated: S-geranylgeranyl cysteine. The propeptide at 182 to 184 (QLL) is removed in mature form.

In terms of assembly, heterodimer with RAP1GAP. Interacts with EPAC2. Interacts with SGSM1. Interacts with SGSM2. Interacts with SGSM3. Interacts with KRIT1. Interacts with RAP1GDS1.

It is found in the cell membrane. It localises to the cytoplasm. Its subcellular location is the cytosol. The protein localises to the cell junction. The catalysed reaction is GTP + H2O = GDP + phosphate + H(+). Activated by guanine nucleotide-exchange factor (GEF) EPAC2 in a cAMP-dependent manner. In terms of biological role, GTP-binding protein that possesses intrinsic GTPase activity. Contributes to the polarizing activity of KRIT1 and CDH5 in the establishment and maintenance of correct endothelial cell polarity and vascular lumen. Required for the localization of phosphorylated PRKCZ, PARD3 and TIAM1 to the cell junction. Plays a role in the establishment of basal endothelial barrier function. In Bos taurus (Bovine), this protein is Ras-related protein Rap-1b (RAP1B).